A 245-amino-acid polypeptide reads, in one-letter code: MNVTLLIPARYGSSRFPGKPLAPINGKPMIQHVYERASLAKGLTAIYVATDDDRIKEAVEAFGGKVVMTDPQAASGTDRIEDAITQLGLKDDDLIVNLQGDQPLIDPISIEQVITLFERHPGEFSMATLGVEITEKAELDDPKHVKMVFDNNFNALYFSRARIPFGRDTNDYPVYKHLGIYAYTRSFISTFAKLPLGRLEDLEKLEQLRALEHGHKIKVAISAFDSPEVDTPEDIRICEARLAVD.

The protein belongs to the KdsB family.

The protein resides in the cytoplasm. It carries out the reaction 8-amino-3,8-dideoxy-alpha-D-manno-octulosonate + CTP = CMP-8-amino-3,8-dideoxy-alpha-D-manno-oct-2-ulosonate + diphosphate. Its pathway is bacterial outer membrane biogenesis; lipopolysaccharide biosynthesis. Activates KDO8N (a required 8-carbon sugar) for incorporation into bacterial lipopolysaccharide in the Shewanella genus. In Shewanella woodyi (strain ATCC 51908 / MS32), this protein is 8-amino-3,8-dideoxy-manno-octulosonate cytidylyltransferase.